Here is a 378-residue protein sequence, read N- to C-terminus: Monomethylxanthine methyltransferase 1 (378 aa).

Positions 18, 61, 66, 100, 101, 139, 140, and 156 each coordinate S-adenosyl-L-homocysteine. Tyr157, His160, and Trp161 together coordinate theobromine. The Mg(2+) site is built by Asn178, Asp260, Phe262, and Asn263. Tyr362 provides a ligand contact to theobromine.

This sequence belongs to the methyltransferase superfamily. Type-7 methyltransferase family. Mg(2+) is required as a cofactor. Expressed, at low levels, in stems, young leaves, floral buds and immature fruits (grains), but not in roots, old leaves and mature fruits.

The protein localises to the cytoplasm. It catalyses the reaction 7-methylxanthine + S-adenosyl-L-methionine = theobromine + S-adenosyl-L-homocysteine + H(+). It functions in the pathway alkaloid biosynthesis. In terms of biological role, involved in the biosynthesis of caffeine. Catalyzes the conversion of 7-methylxanthine (7mX) to theobromine and of paraxanthine to caffeine. Has a 5-fold preference for 7mX. This is Monomethylxanthine methyltransferase 1 from Coffea arabica (Arabian coffee).